Reading from the N-terminus, the 539-residue chain is 2,3-bisphosphoglycerate-independent phosphoglycerate mutase (539 aa).

Positions 37 and 86 each coordinate Mn(2+). The active site involves S86. Residues H147, 177–178 (RD), R210, R216, 284–287 (RADR), and K359 contribute to the substrate site. D426, H430, D467, H468, and H485 together coordinate Mn(2+).

This sequence belongs to the BPG-independent phosphoglycerate mutase family. The cofactor is Mg(2+). Requires Mn(2+) as cofactor. In terms of tissue distribution, expressed ubiquitously. High expression levels in the nerve ring region, intestine and body wall muscles.

The enzyme catalyses (2R)-2-phosphoglycerate = (2R)-3-phosphoglycerate. Its pathway is carbohydrate degradation; glycolysis; pyruvate from D-glyceraldehyde 3-phosphate: step 3/5. With respect to regulation, activity is not affected by 2,3-bisphosphoglycerate. Its function is as follows. Catalyzes the interconversion of 2-phosphoglycerate and 3-phosphoglycerate. This chain is 2,3-bisphosphoglycerate-independent phosphoglycerate mutase, found in Caenorhabditis elegans.